A 430-amino-acid chain; its full sequence is MATLSLKPSQRYRLSDWLTNSYLLSTNAERQRDASHQIRQEARILRNETNNQTVWDEHDNRTRLAERIDTVNRWKEMLDKCLTDLDAEIDSLTQAKESVEQSLQAKNLPLDVAIECLTLRESRRDIDVVKDPVEEELMKEVEVIEATKKVLQEKISQAFQHLCLLQEIRQQLNSDHRDKMETLEIDRGCLSLNLTAPNLSLKVNPTRVPKDSTTLQEWDDFTRFNKNRADTEMKASIELRETIALAIAQTNNELEAQRVATEFTFRKRLREMESLYSELKWQEKNTLEEIAELQADIRRLEEDLRRKMMNLKLAHTRLESRTYRPNVELCRDQTQYGLIDEVHQLEATISIMKQKLAQTQDALDALFKHLARIQADIACKTNTMLLDTKCMDIRRKLTVPAEKFVPQVDTFTRTTNRTLSPLKTCQLELN.

Coiled coils occupy residues lysine 75–leucine 162 and lysine 226–lysine 380.

The protein belongs to the tektin family. In terms of assembly, microtubule inner protein component of sperm flagellar doublet microtubules. May interact with CCDC172. In terms of processing, tyrosine phosphorylated. Ubiquitinated, leading to its degradation. Deubiquitinated by USP16, promoting its stability.

Its subcellular location is the cytoplasm. It localises to the cytoskeleton. The protein resides in the cilium axoneme. It is found in the flagellum axoneme. The protein localises to the microtubule organizing center. Microtubule inner protein (MIP) part of the dynein-decorated doublet microtubules (DMTs) in cilia and flagellar axoneme. Plays a key role in the assembly or attachment of the inner dynein arm to microtubules in sperm flagella and tracheal cilia. Forms filamentous polymers in the walls of ciliary and flagellar microtubules. The polypeptide is Tektin-2 (Tekt2) (Rattus norvegicus (Rat)).